Here is a 113-residue protein sequence, read N- to C-terminus: Iron-sulfur cluster insertion protein ErpA (113 aa).

Iron-sulfur cluster-binding residues include C41, C105, and C107.

Belongs to the HesB/IscA family. Homodimer. Iron-sulfur cluster is required as a cofactor.

Functionally, required for insertion of 4Fe-4S clusters for at least IspG. This is Iron-sulfur cluster insertion protein ErpA from Actinobacillus pleuropneumoniae serotype 5b (strain L20).